The primary structure comprises 286 residues: MILVVGGTGTIGSEVVRLLQEAKLPFKALVRDAAKARELNARGVQTAAGDLREPRTLPAALGGVDKVFVVTPLVPDQVQMRAALITAAKTAGVKHFVMSTGIGAAPDSPVQIGRWLGENQQQVQESGMAWTFVQPGFFMQNLLMYAQAIREKGEFYMPLGEGKVSWIDARDIAAVAVQALTKPGHENQAYPVTGPQALSGAEVAAALSAAAGRPVRYVAITLEQAKQAMTGMGMPESLADAMNELYALAPPDYLAGVLDTVPKVTGRPARTFAEFAKAHAAAFGAA.

NADP(+) contacts are provided by residues 6–11 (GGTGTI), arginine 31, and 136–141 (GFFMQN).

The protein belongs to the NmrA-type oxidoreductase family. Azoreductase type 3 subfamily. Monomer.

Functionally, catalyzes the reductive cleavage of azo bond in aromatic azo compounds to the corresponding amines. Uses preferentially NADPH rather than NADH as an electron donor for its activity. The enzyme reductively cleaved Orange II and carboxy-Orange II, and can also reduce several sulfonated structural analogs, which carry a hydroxy group in the 2 position of the naphthol ring. The polypeptide is NAD(P)H azoreductase (azoB) (Xenophilus azovorans).